The chain runs to 801 residues: MLQNVTPHNKLPGEGNAGLLGLGPEAAAPGKRIRKPSLLYEGFESPTMASVPALQLTPANPPPPEVSNPKKPGRVTNQLQYLHKVVMKALWKHQFAWPFRQPVDAVKLGLPDYHKIIKQPMDMGTIKRRLENNYYWAASECMQDFNTMFTNCYIYNKPTDDIVLMAQTLEKIFLQKVASMPQEEQELVVTIPKNSHKKGAKLAALQGSVTSAHQVPAVSSVSHTALYTPPPEIPTTVLNIPHPSVISSPLLKSLHSAGPPLLAVTAAPPAQPLAKKKGVKRKADTTTPTPTAILAPGSPASPPGSLEPKAARLPPMRRESGRPIKPPRKDLPDSQQQHQSSKKGKLSEQLKHCNGILKELLSKKHAAYAWPFYKPVDASALGLHDYHDIIKHPMDLSTVKRKMENRDYRDAQEFAADVRLMFSNCYKYNPPDHDVVAMARKLQDVFEFRYAKMPDEPLEPGPLPVSTAMPPGLAKSSSESSSEESSSESSSEEEEEEDEEDEEEEESESSDSEEERAHRLAELQEQLRAVHEQLAALSQGPISKPKRKREKKEKKKKRKAEKHRGRAGADEDDKGPRAPRPPQPKKSKKASGSGGGSAALGPSGFGPSGGSGTKLPKKATKTAPPALPTGYDSEEEEESRPMSYDEKRQLSLDINKLPGEKLGRVVHIIQAREPSLRDSNPEEIEIDFETLKPSTLRELERYVLSCLRKKPRKPYTIKKPVGKTKEELALEKKRELEKRLQDVSGQLNSTKKPPKKANEKTESSSAQQVAVSRLSASSSSSDSSSSSSSSSSSDTSDSDSG.

Position 1 is an N-acetylmethionine (Met1). At Thr6 the chain carries Phosphothreonine. The residue at position 37 (Ser37) is a Phosphoserine. Residues 53-73 form a disordered region; it reads ALQLTPANPPPPEVSNPKKPG. The Bromo 1 domain occupies 74–180; it reads RVTNQLQYLH…KIFLQKVASM (107 aa). Positions 112, 155, 156, 157, 160, and 161 each coordinate a protein. 3 disordered regions span residues 268-349, 456-647, and 737-801; these read PPAQ…LSEQ, EPLE…YDEK, and EKRL…SDSG. The segment covering 285–298 has biased composition (low complexity); it reads TTTPTPTAILAPGS. Ser298, Ser301, and Ser305 each carry phosphoserine. Basic and acidic residues predominate over residues 316–332; the sequence is MRRESGRPIKPPRKDLP. Positions 344 to 453 constitute a Bromo 2 domain; the sequence is GKLSEQLKHC…DVFEFRYAKM (110 aa). Residues 481–514 are compositionally biased toward acidic residues; sequence SSEESSSESSSEEEEEEDEEDEEEEESESSDSEE. The segment covering 544–566 has biased composition (basic residues); sequence KPKRKREKKEKKKKRKAEKHRGR. A Nuclear localization signal motif is present at residues 555-559; it reads KKKRK. A compositionally biased stretch (gly residues) spans 592 to 612; it reads GSGGGSAALGPSGFGPSGGSG. An NET domain is found at 632-714; the sequence is DSEEEEESRP…SCLRKKPRKP (83 aa). At Ser633 the chain carries Phosphoserine. A compositionally biased stretch (low complexity) spans 763 to 795; the sequence is SSSAQQVAVSRLSASSSSSDSSSSSSSSSSSDT.

It belongs to the BET family. In terms of assembly, homodimer. Interacts with E2F1. Interacts with (acetylated) STAT3; promoting STAT3 recruitment to chromatin. Interacts with CTCF; promoting BRD2 recruitment to chromatin. As to quaternary structure, (Microbial infection) Interacts with herpes virus 8 protein LANA1.

Its subcellular location is the nucleus. It is found in the chromosome. Its activity is regulated as follows. Inhibited by JQ1, a thieno-triazolo-1,4-diazepine derivative, which specifically inhibits members of the BET family (BRD2, BRD3 and BRD4). The first bromo domain is inhibited by GSK778 (iBET-BD1), which specifically inhibits the first bromo domain of members of the BET family (BRD2, BRD3 and BRD4). The second bromo domain is inhibited by ABBV-744, which specifically inhibits the second bromo domain of members of the BET family (BRD2, BRD3 and BRD4). The second bromo domain is inhibited by GSK046 (iBET-BD2), which specifically inhibits the second bromo domain of members of the BET family (BRD2, BRD3 and BRD4). Functionally, chromatin reader protein that specifically recognizes and binds histone H4 acetylated at 'Lys-5' and 'Lys-12' (H4K5ac and H4K12ac, respectively), thereby controlling gene expression and remodeling chromatin structures. Recruits transcription factors and coactivators to target gene sites, and activates RNA polymerase II machinery for transcriptional elongation. Plays a key role in genome compartmentalization via its association with CTCF and cohesin: recruited to chromatin by CTCF and promotes formation of topologically associating domains (TADs) via its ability to bind acetylated histones, contributing to CTCF boundary formation and enhancer insulation. Also recognizes and binds acetylated non-histone proteins, such as STAT3. Involved in inflammatory response by regulating differentiation of naive CD4(+) T-cells into T-helper Th17: recognizes and binds STAT3 acetylated at 'Lys-87', promoting STAT3 recruitment to chromatin. In addition to acetylated lysines, also recognizes and binds lysine residues on histones that are both methylated and acetylated on the same side chain to form N6-acetyl-N6-methyllysine (Kacme), an epigenetic mark of active chromatin associated with increased transcriptional initiation. Specifically binds histone H4 acetyl-methylated at 'Lys-5' and 'Lys-12' (H4K5acme and H4K12acme, respectively). This Homo sapiens (Human) protein is Bromodomain-containing protein 2.